The following is a 363-amino-acid chain: MSSDAARTPLLPTEKIDTMAQDFNLNSRTSSSRKRRLRRSRSAPRGDCMYNDDVKIDEPPPHPSKIPMFSDLNPNLRRVIMFLALYLTIGTLCFYLVRDQISGHKTSGVVDALYFCIVTMTTVGYGDLVPNSSASRLLACAFVFSGMVLVGHLLSRAADYLVEKQEALLVRAFHLRQSFGPTDILKELHTNKLRYKCYATCLVLVVLFIVGTIFLVMVEKMPVISAFYCVCSTVTTLGYGDKSFNSEAGRLFAVFWILTSSICLAQFFLYVAELNTENKQRALVKWVLTRRITNNDLEAADLDEDGVVGAAEFIVYKLKEMGKIDEKDISGIMDEFEQLDYDESGTLTTSDIVLAQTTSQIQR.

Positions 1–61 (MSSDAARTPL…DDVKIDEPPP (61 aa)) are disordered. At 1–78 (MSSDAARTPL…FSDLNPNLRR (78 aa)) the chain is on the cytoplasmic side. Over residues 31-42 (SSRKRRLRRSRS) the composition is skewed to basic residues. A helical transmembrane segment spans residues 79 to 99 (VIMFLALYLTIGTLCFYLVRD). The pore-forming intramembrane region spans 111–130 (DALYFCIVTMTTVGYGDLVP). The chain crosses the membrane as a helical span at residues 137–157 (LLACAFVFSGMVLVGHLLSRA). At 158-197 (ADYLVEKQEALLVRAFHLRQSFGPTDILKELHTNKLRYKC) the chain is on the cytoplasmic side. The chain crosses the membrane as a helical span at residues 198 to 218 (YATCLVLVVLFIVGTIFLVMV). Residues 225 to 244 (SAFYCVCSTVTTLGYGDKSF) constitute an intramembrane region (pore-forming). Residues 251 to 271 (LFAVFWILTSSICLAQFFLYV) form a helical membrane-spanning segment. Residues 272 to 363 (AELNTENKQR…LAQTTSQIQR (92 aa)) are Cytoplasmic-facing. EF-hand domains are found at residues 288-323 (LTRR…EMGK) and 327-362 (KDIS…SQIQ). Positions 296–298 (DLE) match the Endoplasmic reticulum release signal motif. Ca(2+)-binding residues include aspartate 301, aspartate 303, aspartate 305, glutamate 312, aspartate 340, aspartate 342, serine 344, threonine 346, and aspartate 351.

The protein belongs to the two pore domain potassium channel (TC 1.A.1.7) family. Homodimer. Interacts with GRF1 and GRF6, but only GRF6 modulates the channel activity. Phosphorylation at Ser-42 increases and stabilizes the interaction with 14-3-3 proteins. Detected in mesophyll cells, guard cells and vascular tissues of the leaves. Expressed in the hilum, where the funiculus is attached during fruit maturation and in the embryo. Also expressed at a lower level in seedlings, root tips and elongation zones, and flowers. Could be detected in mitotically active tissues.

Its subcellular location is the vacuole membrane. Could be activated by protein kinase C. Strongly induced by calcium. Blocked by barium, tetraethylammonium (TEA), quinine and quinidine. Voltage-independent, large conductance and potassium-selective tonoplast ion channel. Regulated by cytoplasmic calcium and pH. Does not mediate slow-vacuolar (SV) ionic currents, but essential to establish VK currents. Has some permeability for Rb(+) and NH(4)(+), but none for Na(+), Cs(+) or Li(+). Involved in intracellular K(+) redistribution and/or K(+) retranslocation between different tissues. In Arabidopsis thaliana (Mouse-ear cress), this protein is Two-pore potassium channel 1 (TPK1).